Reading from the N-terminus, the 325-residue chain is GMP reductase (325 aa).

The Thioimidate intermediate role is filled by cysteine 174. 203-226 is a binding site for NADP(+); the sequence is IIADGGIRTHGDIAKSIRFGATMV.

Belongs to the IMPDH/GMPR family. GuaC type 2 subfamily.

It catalyses the reaction IMP + NH4(+) + NADP(+) = GMP + NADPH + 2 H(+). Functionally, catalyzes the irreversible NADPH-dependent deamination of GMP to IMP. It functions in the conversion of nucleobase, nucleoside and nucleotide derivatives of G to A nucleotides, and in maintaining the intracellular balance of A and G nucleotides. In Helicobacter pylori (strain G27), this protein is GMP reductase.